The following is a 441-amino-acid chain: Methylenetetrahydrofolate--tRNA-(uracil-5-)-methyltransferase TrmFO (441 aa).

10 to 15 (GAGLAG) lines the FAD pocket.

The protein belongs to the MnmG family. TrmFO subfamily. Requires FAD as cofactor.

It is found in the cytoplasm. The enzyme catalyses uridine(54) in tRNA + (6R)-5,10-methylene-5,6,7,8-tetrahydrofolate + NADH + H(+) = 5-methyluridine(54) in tRNA + (6S)-5,6,7,8-tetrahydrofolate + NAD(+). The catalysed reaction is uridine(54) in tRNA + (6R)-5,10-methylene-5,6,7,8-tetrahydrofolate + NADPH + H(+) = 5-methyluridine(54) in tRNA + (6S)-5,6,7,8-tetrahydrofolate + NADP(+). Catalyzes the folate-dependent formation of 5-methyl-uridine at position 54 (M-5-U54) in all tRNAs. This Desulforamulus reducens (strain ATCC BAA-1160 / DSM 100696 / MI-1) (Desulfotomaculum reducens) protein is Methylenetetrahydrofolate--tRNA-(uracil-5-)-methyltransferase TrmFO.